A 398-amino-acid chain; its full sequence is Exodeoxyribonuclease 7 large subunit (398 aa).

The protein belongs to the XseA family. Heterooligomer composed of large and small subunits.

Its subcellular location is the cytoplasm. The enzyme catalyses Exonucleolytic cleavage in either 5'- to 3'- or 3'- to 5'-direction to yield nucleoside 5'-phosphates.. In terms of biological role, bidirectionally degrades single-stranded DNA into large acid-insoluble oligonucleotides, which are then degraded further into small acid-soluble oligonucleotides. This chain is Exodeoxyribonuclease 7 large subunit, found in Chlorobaculum tepidum (strain ATCC 49652 / DSM 12025 / NBRC 103806 / TLS) (Chlorobium tepidum).